The chain runs to 193 residues: ATP synthase subunit b (193 aa).

The helical transmembrane segment at Ile35–Phe55 threads the bilayer.

This sequence belongs to the ATPase B chain family. In terms of assembly, F-type ATPases have 2 components, F(1) - the catalytic core - and F(0) - the membrane proton channel. F(1) has five subunits: alpha(3), beta(3), gamma(1), delta(1), epsilon(1). F(0) has three main subunits: a(1), b(2) and c(10-14). The alpha and beta chains form an alternating ring which encloses part of the gamma chain. F(1) is attached to F(0) by a central stalk formed by the gamma and epsilon chains, while a peripheral stalk is formed by the delta and b chains.

Its subcellular location is the cell membrane. F(1)F(0) ATP synthase produces ATP from ADP in the presence of a proton or sodium gradient. F-type ATPases consist of two structural domains, F(1) containing the extramembraneous catalytic core and F(0) containing the membrane proton channel, linked together by a central stalk and a peripheral stalk. During catalysis, ATP synthesis in the catalytic domain of F(1) is coupled via a rotary mechanism of the central stalk subunits to proton translocation. In terms of biological role, component of the F(0) channel, it forms part of the peripheral stalk, linking F(1) to F(0). The polypeptide is ATP synthase subunit b (Mycoplasmopsis synoviae (strain 53) (Mycoplasma synoviae)).